We begin with the raw amino-acid sequence, 812 residues long: Valine--tRNA ligase (812 aa).

A 'HIGH' region motif is present at residues Pro46–His56. The 'KMSKS' region signature appears at Lys536 to Ser540. Lys539 is an ATP binding site.

Belongs to the class-I aminoacyl-tRNA synthetase family. ValS type 2 subfamily. Monomer.

It localises to the cytoplasm. It carries out the reaction tRNA(Val) + L-valine + ATP = L-valyl-tRNA(Val) + AMP + diphosphate. Its function is as follows. Catalyzes the attachment of valine to tRNA(Val). As ValRS can inadvertently accommodate and process structurally similar amino acids such as threonine, to avoid such errors, it has a 'posttransfer' editing activity that hydrolyzes mischarged Thr-tRNA(Val) in a tRNA-dependent manner. The chain is Valine--tRNA ligase from Rickettsia bellii (strain OSU 85-389).